The primary structure comprises 359 residues: Aromatic amino acid aminotransferase (359 aa).

The segment at 1-42 (MSERKPPYLRSALDSIPPYRPGRKVVGPDGRSAKLSSNESPF) is disordered. The residue at position 223 (Lys223) is an N6-(pyridoxal phosphate)lysine.

It belongs to the class-II pyridoxal-phosphate-dependent aminotransferase family. In terms of assembly, homodimer. It depends on pyridoxal 5'-phosphate as a cofactor.

It catalyses the reaction an aromatic L-alpha-amino acid + 2-oxoglutarate = an aromatic oxo-acid + L-glutamate. Its function is as follows. Aminotransferase that catalyzes the conversion of aromatic amino acids and 2-oxoglutarate into corresponding aromatic oxo acids and L-glutamate. In Thermobifida fusca (strain YX), this protein is Aromatic amino acid aminotransferase.